The chain runs to 1656 residues: Probable phospholipid-transporting ATPase DNF3 (1656 aa).

Over 1 to 164 the chain is Lumenal; sequence MGIADGQRRR…PRQLYAQFSK (164 aa). Residues 36–74 are disordered; sequence ELEDINESKTFSGSDNNDKDDRDETSGNYAAEEDYEMEE. The segment covering 51–60 has biased composition (basic and acidic residues); that stretch reads NNDKDDRDET. Residues 165–185 form a helical membrane-spanning segment; the sequence is LANTYFFIVAVLQMIPGWSTT. The Cytoplasmic portion of the chain corresponds to 186–451; the sequence is GTYTTIIPLC…RTKAPKLQRK (266 aa). The chain crosses the membrane as a helical span at residues 452-472; that stretch reads INMIIVFMVFVVATISLFSYL. Residues 473-495 are Lumenal-facing; the sequence is GHVLHKKKYIDQNKAWYLFQADA. The chain crosses the membrane as a helical span at residues 496-516; sequence GVAPTIMSFIIMYNTVIPLSL. At 517–1157 the chain is on the cytoplasmic side; that stretch reads YVTMEIIKVV…ISKMNAVSQE (641 aa). Catalysis depends on Asp-566, which acts as the 4-aspartylphosphate intermediate. The ATP site is built by Asp-566, Lys-567, and Thr-568. Asp-566 lines the Mg(2+) pocket. Thr-568 lines the Mg(2+) pocket. Phosphoserine is present on Ser-627. ATP is bound by residues Glu-765, Phe-813, Ser-815, Lys-818, Lys-838, Arg-1034, Thr-1035, Thr-1114, Gly-1115, Asp-1116, 1167–1174, Arg-1202, and Lys-1208; that span reads VVVIDGAT. The helical transmembrane segment at 1158 to 1178 threads the bilayer; it reads VDSGNIAHCVVVIDGATMAMF. Over 1179–1318 the chain is Lumenal; sequence EGNPTYMSVF…MFSGSSLYEP (140 aa). Mg(2+) is bound at residue Asp-1229. Asn-1232 and Asp-1233 together coordinate ATP. A helical transmembrane segment spans residues 1319-1339; the sequence is WSLSMFNTLFTSLPVLCIGMF. At 1340-1365 the chain is on the cytoplasmic side; the sequence is EKDLKPMTLLTVPELYSYGRLSQGFN. Residues 1366–1386 form a helical membrane-spanning segment; it reads WLIFMEWVILATTNSLIITFL. Over 1387–1395 the chain is Lumenal; sequence NVVMWGMSS. A helical transmembrane segment spans residues 1396–1416; that stretch reads LSDNTMYPLGLINFTAIVALI. At 1417–1432 the chain is on the cytoplasmic side; that stretch reads NVKSQFVEMHNRNWLA. The chain crosses the membrane as a helical span at residues 1433–1453; sequence FTSVVLSCGGWLVWCCALPIL. Over 1454 to 1473 the chain is Lumenal; that stretch reads NNTDQIYDVAYGFYNHFGKD. A helical membrane pass occupies residues 1474–1494; it reads ITFWCTSLVLALLPITLDIVY. Over 1495–1656 the chain is Cytoplasmic; that stretch reads KTFKVMIWPS…IIQARLKDLE (162 aa). The disordered stretch occupies residues 1554-1576; that stretch reads PRTNSRASAKTHNSSIYSMSNGN.

The protein belongs to the cation transport ATPase (P-type) (TC 3.A.3) family. Type IV subfamily. Component of a flippase complex consisting of DNF3 and YNR048W/CRF1. Interacts with YNR048W/CRF1; the interaction is direct and required for proper expression and endoplasmic reticulum (ER) export of either partner. Mg(2+) serves as cofactor.

It is found in the golgi apparatus. Its subcellular location is the trans-Golgi network membrane. The protein localises to the endosome membrane. It catalyses the reaction ATP + H2O + phospholipidSide 1 = ADP + phosphate + phospholipidSide 2.. The enzyme catalyses a 1,2-diacyl-sn-glycero-3-phosphocholine(out) + ATP + H2O = a 1,2-diacyl-sn-glycero-3-phosphocholine(in) + ADP + phosphate + H(+). It carries out the reaction a 1,2-diacyl-sn-glycero-3-phosphoethanolamine(out) + ATP + H2O = a 1,2-diacyl-sn-glycero-3-phosphoethanolamine(in) + ADP + phosphate + H(+). Functionally, catalytic component of a P4-ATPase flippase complex which catalyzes the hydrolysis of ATP coupled to the transport of phosphatidylcholine and small amounts of phosphatidylethanolamine from the lumen to the cytosolic leaflet of the trans-Golgi network and ensures the maintenance of asymmetric distribution of phospholipids. May be involved in transport from early endosomes to the trans-Golgi network (TGN). This Saccharomyces cerevisiae (strain ATCC 204508 / S288c) (Baker's yeast) protein is Probable phospholipid-transporting ATPase DNF3 (DNF3).